Here is a 386-residue protein sequence, read N- to C-terminus: Succinyl-diaminopimelate desuccinylase (386 aa).

Residue His77 coordinates Zn(2+). Asp79 is a catalytic residue. Position 110 (Asp110) interacts with Zn(2+). Glu144 acts as the Proton acceptor in catalysis. Residues Glu145, Glu173, and His359 each coordinate Zn(2+).

Belongs to the peptidase M20A family. DapE subfamily. Homodimer. Requires Zn(2+) as cofactor. It depends on Co(2+) as a cofactor.

The catalysed reaction is N-succinyl-(2S,6S)-2,6-diaminopimelate + H2O = (2S,6S)-2,6-diaminopimelate + succinate. Its pathway is amino-acid biosynthesis; L-lysine biosynthesis via DAP pathway; LL-2,6-diaminopimelate from (S)-tetrahydrodipicolinate (succinylase route): step 3/3. Its function is as follows. Catalyzes the hydrolysis of N-succinyl-L,L-diaminopimelic acid (SDAP), forming succinate and LL-2,6-diaminopimelate (DAP), an intermediate involved in the bacterial biosynthesis of lysine and meso-diaminopimelic acid, an essential component of bacterial cell walls. The polypeptide is Succinyl-diaminopimelate desuccinylase (Methylibium petroleiphilum (strain ATCC BAA-1232 / LMG 22953 / PM1)).